The chain runs to 229 residues: MPILKNDWAPLLEEEFQKPYYLKLREFLKEEYRTRTIYPDMYDIFNALHYTPYANVKVVLLGQDPYHGPGQAHGLSFSVKPGVPVPPSLVNIFKELHDDLGCYIPDNGYLVKWAKQGVLLLNTVLTVRRGQANSHRGKGWEHFTDRVIELVNEKDDPVVFLLWGRNAQEKKERITNPRHHIIEAPHPSPFSAARGFFGHRPFSRTNAFLTKCGREPIDWQIENIGARAE.

Residue Asp-64 is the Proton acceptor of the active site.

This sequence belongs to the uracil-DNA glycosylase (UDG) superfamily. UNG family.

It is found in the cytoplasm. The enzyme catalyses Hydrolyzes single-stranded DNA or mismatched double-stranded DNA and polynucleotides, releasing free uracil.. Functionally, excises uracil residues from the DNA which can arise as a result of misincorporation of dUMP residues by DNA polymerase or due to deamination of cytosine. The protein is Uracil-DNA glycosylase of Geobacillus thermodenitrificans (strain NG80-2).